We begin with the raw amino-acid sequence, 475 residues long: MKIERKQSVVLVPHPYQGHLTPMLQLGSILHSQGFSVIVAHTQYNTPNYSNHPQFVFHSMDDGLQGIDMSFPSLENIYDMNENCKAPLRNYLVSMMEEEGDQLACIVYDNVMFFVDDVATQLKLPSIVLRTFSAAYLHSMITILQQPEIYLPFEDSQLLDPLPELHPLRFKDVPFPIINNTVPEPILDFCRAMSDIGSSVATIWNTMQDLESSMLLRLQEHYKVPFFPIGPVHKMASLVSSTSILEEDNSCIEWLDRQAPNSVLYVSLGSLVRIDHKELIETAWGLANSDQPFLWVIRPGSVSGFQCAEALPDGFEKMVGERGRIVKWAPQKQVLAHPAVAGFFTHCGWNSTLESICEEVPMVCRPFLADQLVNARYLSQIYKVGFELEVIERTVIEKTIRKLMLSEEGKDVKKRVADMKQKIVAGMQIDCTSHKNLNDLVDFISALPSRLAPPTPVFGAIMSSNHIASKCIIES.

His19 functions as the Proton acceptor in the catalytic mechanism. His19 provides a ligand contact to an anthocyanidin. Asp109 functions as the Charge relay in the catalytic mechanism. Thr131, Ala329, Gln331, His346, Trp349, Asn350, Ser351, and Glu354 together coordinate UDP-alpha-D-glucose. Ala369 provides a ligand contact to an anthocyanidin. UDP-alpha-D-glucose is bound by residues Asp370 and Gln371.

The protein belongs to the UDP-glycosyltransferase family. Expressed in flowers and fruits.

Its subcellular location is the cytoplasm. It is found in the nucleus. The catalysed reaction is 2-cis-(+)-abscisate + UDP-alpha-D-glucose = beta-D-glucopyranosyl cis-(+)-abscisate + UDP. Its function is as follows. Glucosyltransferase acting on abscisic acid (ABA) but not on auxin (IAA). The chain is UDP-glycosyltransferase 76E1 from Solanum lycopersicum (Tomato).